Here is a 99-residue protein sequence, read N- to C-terminus: Small ribosomal subunit protein eS24 (99 aa).

Belongs to the eukaryotic ribosomal protein eS24 family.

The sequence is that of Small ribosomal subunit protein eS24 from Methanothrix thermoacetophila (strain DSM 6194 / JCM 14653 / NBRC 101360 / PT) (Methanosaeta thermophila).